We begin with the raw amino-acid sequence, 406 residues long: Mitochondrial ribosome-associated GTPase 2 (406 aa).

The interval 15-406 (FQGVGHWALS…LGQGRQPLRW (392 aa)) is localized in the mitochondria. The tract at residues 30-406 (KPSRLLPQRA…LGQGRQPLRW (377 aa)) is not localized in the mitochondria. An Obg domain is found at 70-224 (RYFVDYRRVL…RVLHLELKTV (155 aa)). The 166-residue stretch at 225–390 (AHAGMVGFPN…LLLHLKVLYD (166 aa)) folds into the OBG-type G domain. GTP-binding positions include 231–238 (GFPNAGKS), 256–260 (FTTLK), 278–281 (DIPG), 345–348 (NKID), and 371–373 (SAL). 2 residues coordinate Mg(2+): S238 and T258.

Belongs to the TRAFAC class OBG-HflX-like GTPase superfamily. OBG GTPase family. Associates with the mitochondrial ribosome large subunit; the association occurs in a GTP-dependent manner. Mg(2+) is required as a cofactor.

Its subcellular location is the mitochondrion. The protein localises to the mitochondrion inner membrane. Its function is as follows. Plays a role in the regulation of the mitochondrial ribosome assembly and of translational activity. Displays GTPase activity. Involved in the ribosome maturation process. The protein is Mitochondrial ribosome-associated GTPase 2 (MTG2) of Homo sapiens (Human).